We begin with the raw amino-acid sequence, 253 residues long: tRNA pseudouridine synthase A (253 aa).

Asp53 functions as the Nucleophile in the catalytic mechanism. Tyr112 provides a ligand contact to substrate.

This sequence belongs to the tRNA pseudouridine synthase TruA family. As to quaternary structure, homodimer.

It carries out the reaction uridine(38/39/40) in tRNA = pseudouridine(38/39/40) in tRNA. In terms of biological role, formation of pseudouridine at positions 38, 39 and 40 in the anticodon stem and loop of transfer RNAs. The chain is tRNA pseudouridine synthase A from Lactococcus lactis subsp. cremoris (strain MG1363).